The sequence spans 195 residues: MKTFVIGIGGVTNGGKTTLAKNLQKRLPNCSVISQDDFFKPESEIDIDENGFLQYDVLEALNMEKMMSAVSCWMENPGSSAGPAALESAQGVPILIIEGFLLFNYKPLDTIWNRSYFLTVPYEECKRRRSTRVYEPPDPPGYFDGHVWPMYLKHRQEMNSITWDIVYLDGTRSEEDLFSQVYEDVKQELEKQNGL.

10–18 (GVTNGGKTT) contributes to the ATP binding site. 2 residues coordinate Mg(2+): Thr17 and Asp36. Asp36 serves as the catalytic Proton acceptor. Substrate contacts are provided by residues 36–39 (DDFF) and 55–56 (YD). Residue Arg128 participates in ATP binding. Substrate is bound by residues Arg129 and 134 to 135 (YE). ATP contacts are provided by residues 132-134 (RVY) and 172-174 (RSE).

Belongs to the uridine kinase family. NRK subfamily. In terms of assembly, monomer.

The catalysed reaction is beta-nicotinamide D-riboside + ATP = beta-nicotinamide D-ribonucleotide + ADP + H(+). The enzyme catalyses beta-D-ribosylnicotinate + ATP = nicotinate beta-D-ribonucleotide + ADP + H(+). Its pathway is cofactor biosynthesis; NAD(+) biosynthesis. In terms of biological role, catalyzes the phosphorylation of nicotinamide riboside (NR) and nicotinic acid riboside (NaR) to form nicotinamide mononucleotide (NMN) and nicotinic acid mononucleotide (NaMN). The chain is Nicotinamide riboside kinase 1 (Nmrk1) from Rattus norvegicus (Rat).